The sequence spans 343 residues: Nuclear distribution protein nudE-like 1 (343 aa).

The stretch at 25 to 190 forms a coiled coil; that stretch reads KYKQSFQEAR…LAVRERQQEV (166 aa). Disordered stretches follow at residues 184-204 and 322-343; these read RERQ…LDCE and QGTP…PLSV.

Belongs to the nudE family. Post-translationally, phosphorylated in mitosis.

Its subcellular location is the cytoplasm. The protein resides in the cytoskeleton. It localises to the microtubule organizing center. The protein localises to the centrosome. It is found in the spindle. Functionally, required for organization of the cellular microtubule array and microtubule anchoring at the centrosome. Positively regulates the activity of the minus-end directed microtubule motor protein dynein. May enhance dynein-mediated microtubule sliding by targeting dynein to the microtubule plus end. Positively regulates lysosome peripheral distribution and ruffled border formation in osteoclasts. The polypeptide is Nuclear distribution protein nudE-like 1 (NDEL1) (Gallus gallus (Chicken)).